We begin with the raw amino-acid sequence, 376 residues long: UPF0754 membrane protein SERP1382 (376 aa).

The next 2 membrane-spanning stretches (helical) occupy residues 4–24 and 356–376; these read ILLV…TNMI and TLGF…AIFV.

This sequence belongs to the UPF0754 family.

It is found in the cell membrane. The chain is UPF0754 membrane protein SERP1382 from Staphylococcus epidermidis (strain ATCC 35984 / DSM 28319 / BCRC 17069 / CCUG 31568 / BM 3577 / RP62A).